Reading from the N-terminus, the 451-residue chain is Bifunctional protein GlmU (451 aa).

Positions 1-225 (MSLAVVILAA…EFEIQGVNDR (225 aa)) are pyrophosphorylase. UDP-N-acetyl-alpha-D-glucosamine is bound by residues 8 to 11 (LAAG), Lys-22, Gln-73, 78 to 79 (GT), 99 to 101 (YGD), Gly-135, Glu-150, Asn-165, and Asn-223. A Mg(2+)-binding site is contributed by Asp-101. Asn-223 serves as a coordination point for Mg(2+). The segment at 226–246 (IQLAQLEREWQKHIAEVIMSK) is linker. The segment at 247–451 (GVSVADPSRI…IDTWQRPVKK (205 aa)) is N-acetyltransferase. Residues Arg-329 and Lys-347 each coordinate UDP-N-acetyl-alpha-D-glucosamine. Residue His-359 is the Proton acceptor of the active site. UDP-N-acetyl-alpha-D-glucosamine contacts are provided by Tyr-362 and Asn-373. Residues Ala-376, 382–383 (NY), Ser-401, Ala-419, and Arg-436 each bind acetyl-CoA.

The protein in the N-terminal section; belongs to the N-acetylglucosamine-1-phosphate uridyltransferase family. In the C-terminal section; belongs to the transferase hexapeptide repeat family. In terms of assembly, homotrimer. Mg(2+) is required as a cofactor.

The protein resides in the cytoplasm. The enzyme catalyses alpha-D-glucosamine 1-phosphate + acetyl-CoA = N-acetyl-alpha-D-glucosamine 1-phosphate + CoA + H(+). It catalyses the reaction N-acetyl-alpha-D-glucosamine 1-phosphate + UTP + H(+) = UDP-N-acetyl-alpha-D-glucosamine + diphosphate. The protein operates within nucleotide-sugar biosynthesis; UDP-N-acetyl-alpha-D-glucosamine biosynthesis; N-acetyl-alpha-D-glucosamine 1-phosphate from alpha-D-glucosamine 6-phosphate (route II): step 2/2. It functions in the pathway nucleotide-sugar biosynthesis; UDP-N-acetyl-alpha-D-glucosamine biosynthesis; UDP-N-acetyl-alpha-D-glucosamine from N-acetyl-alpha-D-glucosamine 1-phosphate: step 1/1. It participates in bacterial outer membrane biogenesis; LPS lipid A biosynthesis. Catalyzes the last two sequential reactions in the de novo biosynthetic pathway for UDP-N-acetylglucosamine (UDP-GlcNAc). The C-terminal domain catalyzes the transfer of acetyl group from acetyl coenzyme A to glucosamine-1-phosphate (GlcN-1-P) to produce N-acetylglucosamine-1-phosphate (GlcNAc-1-P), which is converted into UDP-GlcNAc by the transfer of uridine 5-monophosphate (from uridine 5-triphosphate), a reaction catalyzed by the N-terminal domain. This chain is Bifunctional protein GlmU, found in Francisella philomiragia subsp. philomiragia (strain ATCC 25017 / CCUG 19701 / FSC 153 / O#319-036).